The sequence spans 265 residues: Probable enoyl-CoA hydratase 1, peroxisomal (265 aa).

N-acetylmethionine is present on Met-1. Substrate-binding positions include Ser-68 to Leu-72 and Ala-112. The Microbody targeting signal signature appears at Ser-263–Leu-265.

It belongs to the enoyl-CoA hydratase/isomerase family.

It localises to the peroxisome. It carries out the reaction a (3S)-3-hydroxyacyl-CoA = a (2E)-enoyl-CoA + H2O. The catalysed reaction is a 4-saturated-(3S)-3-hydroxyacyl-CoA = a (3E)-enoyl-CoA + H2O. Its pathway is lipid metabolism; fatty acid beta-oxidation. In terms of biological role, straight-chain enoyl-CoA thioesters from C4 up to at least C16 are processed, although with decreasing catalytic rate. The polypeptide is Probable enoyl-CoA hydratase 1, peroxisomal (Arabidopsis thaliana (Mouse-ear cress)).